The primary structure comprises 360 residues: GTPase Obg (360 aa).

The Obg domain maps to 1–156 (MFVDSVEIII…KCVRLELKLI (156 aa)). In terms of domain architecture, OBG-type G spans 157 to 360 (ADIGLVGFPN…LKFVLLKALQ (204 aa)). Residues 163 to 170 (GFPNAGKS), 188 to 192 (FTTLV), 210 to 213 (DIPG), 279 to 282 (NKCD), and 341 to 343 (SAV) each bind GTP. Mg(2+)-binding residues include S170 and T190.

This sequence belongs to the TRAFAC class OBG-HflX-like GTPase superfamily. OBG GTPase family. Monomer. Mg(2+) serves as cofactor.

Its subcellular location is the cytoplasm. Functionally, an essential GTPase which binds GTP, GDP and possibly (p)ppGpp with moderate affinity, with high nucleotide exchange rates and a fairly low GTP hydrolysis rate. Plays a role in control of the cell cycle, stress response, ribosome biogenesis and in those bacteria that undergo differentiation, in morphogenesis control. The sequence is that of GTPase Obg from Helicobacter pylori (strain J99 / ATCC 700824) (Campylobacter pylori J99).